Consider the following 75-residue polypeptide: Veswaprin-c (75 aa).

An N-terminal signal peptide occupies residues 1 to 24 (MSSGGLLLLLGLLTLWAELTPVSS). The region spanning 27–72 (RPKKPGLCPPRPQKPPCVRECKNDWRCPGERKCCRYGCIYECRDPI) is the WAP domain. 4 disulfide bridges follow: Cys34/Cys60, Cys43/Cys64, Cys47/Cys59, and Cys53/Cys68.

It belongs to the venom waprin family. Expressed by the venom gland.

The protein localises to the secreted. In terms of biological role, damages membranes of susceptible bacteria. Has no hemolytic activity. Not toxic to mice. Does not inhibit the proteinases elastase and cathepsin G. This Demansia vestigiata (Lesser black whip snake) protein is Veswaprin-c.